We begin with the raw amino-acid sequence, 61 residues long: Odorranain-A6 (61 aa).

Positions 1–22 are cleaved as a signal peptide; it reads MFSMKKSLLLLFFLGTISLSLC. Residues 23–45 constitute a propeptide that is removed on maturation; the sequence is EQERDAEEEEGSENGAEDIKINR.

Belongs to the frog skin active peptide (FSAP) family. Brevinin subfamily. In terms of tissue distribution, expressed by the skin glands.

It localises to the secreted. The polypeptide is Odorranain-A6 (Odorrana hainanensis (Odor frog)).